The chain runs to 381 residues: Putative F-box protein At3g17500 (381 aa).

Positions 1–45 (MMSNLPLDLVEEILSRVPATSLKRLRSTCKSWNNCYKDQRFTEKH) constitute an F-box domain.

The chain is Putative F-box protein At3g17500 from Arabidopsis thaliana (Mouse-ear cress).